Here is a 152-residue protein sequence, read N- to C-terminus: Transcriptional regulator MraZ (152 aa).

SpoVT-AbrB domains lie at 5–52 and 81–124; these read ATMV…TLPA and ASEC…DEQT.

This sequence belongs to the MraZ family. As to quaternary structure, forms oligomers.

It is found in the cytoplasm. The protein resides in the nucleoid. Negatively regulates its own expression and that of the subsequent genes in the proximal part of the division and cell wall (dcw) gene cluster. Acts by binding directly to DNA. May also regulate the expression of genes outside the dcw cluster. In Yersinia enterocolitica serotype O:8 / biotype 1B (strain NCTC 13174 / 8081), this protein is Transcriptional regulator MraZ.